We begin with the raw amino-acid sequence, 354 residues long: Peroxisomal membrane protein PEX32 (354 aa).

The next 5 membrane-spanning stretches (helical) occupy residues 24-44, 63-83, 84-104, 151-171, and 173-193; these read LLNMPPVITTALYTAFPVIFL, FIAIAIYIMVVKYWTVVACTV, LPTIIALGTCASLWFLKTTID, GFSLIAITPCYIWLMTRIFTV, and SFLLVFGVAWLSFHSSWSVAT. N319 carries an N-linked (GlcNAc...) asparagine glycan.

This sequence belongs to the PEX28-32 family. PEX30/31 subfamily.

It localises to the peroxisome membrane. It is found in the endoplasmic reticulum membrane. In terms of biological role, with PEX24, contributes to tethering of peroxisomes to the endoplasmic reticulum for organelle biogenesis, positioning and segregation. The polypeptide is Peroxisomal membrane protein PEX32 (Ogataea parapolymorpha (strain ATCC 26012 / BCRC 20466 / JCM 22074 / NRRL Y-7560 / DL-1) (Yeast)).